A 95-amino-acid chain; its full sequence is Co-chaperonin GroES (95 aa).

Belongs to the GroES chaperonin family. Heptamer of 7 subunits arranged in a ring. Interacts with the chaperonin GroEL.

Its subcellular location is the cytoplasm. In terms of biological role, together with the chaperonin GroEL, plays an essential role in assisting protein folding. The GroEL-GroES system forms a nano-cage that allows encapsulation of the non-native substrate proteins and provides a physical environment optimized to promote and accelerate protein folding. GroES binds to the apical surface of the GroEL ring, thereby capping the opening of the GroEL channel. In Geobacter metallireducens (strain ATCC 53774 / DSM 7210 / GS-15), this protein is Co-chaperonin GroES.